The following is a 234-amino-acid chain: bZIP transcription factor 27 (234 aa).

The Nuclear localization signal signature appears at 152 to 159; that stretch reads KKRGQDSD. One can recognise a bZIP domain in the interval 163–213; it reads GDRRYKRMIKNRESAARSRARKQAYTNELELEIAHLQTENARLKIQQEQLK. Residues 165 to 184 form a basic motif region; the sequence is RRYKRMIKNRESAARSRARK. Positions 191–212 are leucine-zipper; that stretch reads LELEIAHLQTENARLKIQQEQL. Thr-231 is modified (phosphothreonine).

The protein belongs to the bZIP family. In terms of assembly, self-interacts. Interacts with FT and FD/BZIP14. Interacts with CPK33. Post-translationally, phosphorylated. Expressed on the flanks of the shoot apex.

The protein resides in the nucleus. Functionally, transcription factor required for the transition to flowering promoted by FT. The chain is bZIP transcription factor 27 from Arabidopsis thaliana (Mouse-ear cress).